Here is a 338-residue protein sequence, read N- to C-terminus: Protein SGT1 homolog (338 aa).

Position 2 is an N-acetylalanine (A2). 3 TPR repeats span residues 11–45 (AASRLFRSFSDALIEQDPQAALEELTKALEQKPDD), 46–79 (APYYCQRAYCHILLGNYSDAVADAKKSLELNPNS), and 80–113 (STALLRKGICEYHEKNYAAALETFTEGQKLNSAD). In terms of domain architecture, CS spans 142 to 231 (QSKIKYDWYQ…PEAVRWEKLE (90 aa)). Residues 249 to 338 (LYPSSSHYTR…PPDDMEWKKY (90 aa)) enclose the SGS domain. S254 bears the Phosphoserine mark. Position 257 is a phosphothreonine (T257). A Glycyl lysine isopeptide (Lys-Gly) (interchain with G-Cter in SUMO1); alternate cross-link involves residue K268. K268 participates in a covalent cross-link: Glycyl lysine isopeptide (Lys-Gly) (interchain with G-Cter in SUMO2); alternate. A Phosphoserine modification is found at S304.

It belongs to the SGT1 family. In terms of assembly, probably associates with SCF (SKP1-CUL1-F-box protein) complex through interaction with SKP1. Interacts with S100A6. Interacts with HSP90. In terms of processing, phosphorylated at Ser-254 and Ser-304, dephosphorylation promotes nuclear translocation, most likely due to disruption of the SUGT1-HSP90 complex.

It localises to the cytoplasm. The protein resides in the nucleus. Its function is as follows. May play a role in ubiquitination and subsequent proteasomal degradation of target proteins. The polypeptide is Protein SGT1 homolog (Bos taurus (Bovine)).